A 231-amino-acid chain; its full sequence is Urease accessory protein UreE (231 aa).

The disordered stretch occupies residues 185-231; that stretch reads VASPLDEPHGSGLHIHGIHSHEEGHSHGDHDHDHSHSHGDHDHDHKH. Residues 203-231 show a composition bias toward basic and acidic residues; sequence HSHEEGHSHGDHDHDHSHSHGDHDHDHKH.

This sequence belongs to the UreE family.

The protein resides in the cytoplasm. Its function is as follows. Involved in urease metallocenter assembly. Binds nickel. Probably functions as a nickel donor during metallocenter assembly. This is Urease accessory protein UreE from Yersinia pestis bv. Antiqua (strain Antiqua).